The following is a 501-amino-acid chain: Cytochrome P450 monooxygenase janQ (501 aa).

The helical transmembrane segment at 1 to 16 threads the bilayer; it reads MVLGLLAFIWLMRAWR. Residue Asn132 is glycosylated (N-linked (GlcNAc...) asparagine). A heme-binding site is contributed by Cys439.

The protein belongs to the cytochrome P450 family. Requires heme as cofactor.

Its subcellular location is the membrane. It participates in secondary metabolite biosynthesis. Cytochrome P450 monooxygenase; part of the gene cluster that mediates the biosynthesis of the indole diterpenes janthitremanes such as shearinine K or shearinine A. The geranylgeranyl diphosphate (GGPP) synthase janG catalyzes the first step in janthitremane biosynthesis via conversion of farnesyl pyrophosphate and isopentyl pyrophosphate into geranylgeranyl pyrophosphate (GGPP). Condensation of indole-3-glycerol phosphate with GGPP by the prenyl transferase janC then forms 3-geranylgeranylindole (3-GGI). Epoxidation by the FAD-dependent monooxygenase janM leads to a epoxidized-GGI that is substrate of the terpene cyclase janB for cyclization to yield paspaline. Paspaline is subsequently converted to 13-desoxypaspaline by the cytochrome P450 monooxygenase janP, via beta-PC-M6 in a series of alpha-face oxidations. The cytochrome P450 monooxygenase janQ is proposed to carry out sequential beta-face oxidation steps at C-7 and C-13 of 13-desoxypaspaline to form paspalicine and paspalinine respectively. The indole diterpene prenyltransferase janD may then convert paspalinine into shearinine K which is substrate of janO and/or additional enzymes for oxidation and cyclization to generate shearinine A. This is Cytochrome P450 monooxygenase janQ from Penicillium janthinellum (Penicillium vitale).